Here is a 467-residue protein sequence, read N- to C-terminus: uncharacterized protein (467 aa).

This is an uncharacterized protein from Acanthamoeba polyphaga (Amoeba).